Consider the following 387-residue polypeptide: 3-dehydroquinate synthase (387 aa).

Belongs to the archaeal-type DHQ synthase family.

The enzyme catalyses 2-amino-2,3,7-trideoxy-D-lyxo-hept-6-ulosonate + NAD(+) + H2O = 3-dehydroquinate + NH4(+) + NADH + H(+). In terms of biological role, catalyzes the oxidative deamination and cyclization of 2-amino-3,7-dideoxy-D-threo-hept-6-ulosonic acid (ADH) to yield 3-dehydroquinate (DHQ), which is fed into the canonical shikimic pathway of aromatic amino acid biosynthesis. The sequence is that of 3-dehydroquinate synthase from Halobacterium salinarum (strain ATCC 29341 / DSM 671 / R1).